Here is a 364-residue protein sequence, read N- to C-terminus: Probable dual-specificity RNA methyltransferase RlmN (364 aa).

Glu-107 serves as the catalytic Proton acceptor. A Radical SAM core domain is found at His-113–Asp-346. A disulfide bond links Cys-120 and Cys-351. Positions 127, 131, and 134 each coordinate [4Fe-4S] cluster. S-adenosyl-L-methionine is bound by residues Gly-177–Glu-178, Ser-209, Ser-232–His-234, and Asn-308. Catalysis depends on Cys-351, which acts as the S-methylcysteine intermediate.

Belongs to the radical SAM superfamily. RlmN family. It depends on [4Fe-4S] cluster as a cofactor.

Its subcellular location is the cytoplasm. The catalysed reaction is adenosine(2503) in 23S rRNA + 2 reduced [2Fe-2S]-[ferredoxin] + 2 S-adenosyl-L-methionine = 2-methyladenosine(2503) in 23S rRNA + 5'-deoxyadenosine + L-methionine + 2 oxidized [2Fe-2S]-[ferredoxin] + S-adenosyl-L-homocysteine. The enzyme catalyses adenosine(37) in tRNA + 2 reduced [2Fe-2S]-[ferredoxin] + 2 S-adenosyl-L-methionine = 2-methyladenosine(37) in tRNA + 5'-deoxyadenosine + L-methionine + 2 oxidized [2Fe-2S]-[ferredoxin] + S-adenosyl-L-homocysteine. Its function is as follows. Specifically methylates position 2 of adenine 2503 in 23S rRNA and position 2 of adenine 37 in tRNAs. Confers resistance to some classes of antibiotics. This is Probable dual-specificity RNA methyltransferase RlmN from Staphylococcus carnosus (strain TM300).